The following is a 249-amino-acid chain: 2,3-bisphosphoglycerate-dependent phosphoglycerate mutase (249 aa).

Substrate is bound by residues 11–18, 24–25, Arg63, 90–93, Lys101, and 117–118; these read RHGESEWN, TG, ERHY, and RR. His12 (tele-phosphohistidine intermediate) is an active-site residue. Catalysis depends on Glu90, which acts as the Proton donor/acceptor. Positions 119 to 138 are disordered; the sequence is SYDTPPPPIERGSTYSQDAD. Residue 184 to 185 participates in substrate binding; the sequence is GN.

The protein belongs to the phosphoglycerate mutase family. BPG-dependent PGAM subfamily.

It catalyses the reaction (2R)-2-phosphoglycerate = (2R)-3-phosphoglycerate. It participates in carbohydrate degradation; glycolysis; pyruvate from D-glyceraldehyde 3-phosphate: step 3/5. Functionally, catalyzes the interconversion of 2-phosphoglycerate and 3-phosphoglycerate. This is 2,3-bisphosphoglycerate-dependent phosphoglycerate mutase from Mycolicibacterium paratuberculosis (strain ATCC BAA-968 / K-10) (Mycobacterium paratuberculosis).